An 800-amino-acid chain; its full sequence is Protein SPT2 homolog (800 aa).

Positions 1 to 687 are important for interaction with DNA; it reads MDFHSVLRMA…PGHRPNMQPP (687 aa). Residues 53-82 adopt a coiled-coil conformation; the sequence is QEIQNKEVEAKRKKEGLLAKRKELKHDRKA. Disordered regions lie at residues 70-173, 197-646, and 661-698; these read LAKR…PALN, KEER…MAKP, and VPKS…TSSY. Residues 124–137 are compositionally biased toward acidic residues; that stretch reads TEEDEEYMTEEELY. Over residues 155 to 164 the composition is skewed to low complexity; the sequence is PQKVAKAAPG. The stretch at 196-224 forms a coiled coil; that stretch reads KKEERLRTAEELKELEFLERKAQKADRKD. Composition is skewed to basic and acidic residues over residues 197-226 and 249-259; these read KEER…KDPM and HSVEKRSHENS. The span at 260-272 shows a compositional bias: polar residues; that stretch reads KSSSTEQNGTFRK. A compositionally biased stretch (basic and acidic residues) spans 273-295; that stretch reads SSSDNRSREEKSGSVFHTKDSKF. Composition is skewed to low complexity over residues 328–360, 367–377, 390–424, 443–501, and 514–581; these read SGST…SSGK, SSSARSSSGSG, GASG…SVGA, GVSG…SVSG, and GAPG…ASSS. The segment covering 608–626 has biased composition (polar residues); that stretch reads NSVRHNTTSISVSARSSLG. Over residues 684 to 693 the composition is skewed to pro residues; the sequence is MQPPGRPLPP. The tract at residues 688–800 is important for interaction with histones; that stretch reads GRPLPPITSS…LKSAKKMKSR (113 aa). Residues 756-800 are a coiled coil; the sequence is REQQKEEARSLRLGIQEDLEELRREEEELKQKAKQLKSAKKMKSR.

Belongs to the SPT2 family. Interacts with histones. Interacts with a heterotetrameric complex formed by histone H3 and H4, especially when the histone tetramer is not bound to DNA.

The protein localises to the nucleus. It localises to the nucleolus. Functionally, histone chaperone that stabilizes pre-existing histone tetramers and regulates replication-independent histone exchange on chromatin. Required for normal chromatin refolding in the coding region of transcribed genes, and for the suppression of spurious transcription. Binds DNA and histones and promotes nucleosome assembly (in vitro). Facilitates formation of tetrameric histone complexes containing histone H3 and H4. Modulates RNA polymerase 1-mediated transcription. Binds DNA, with a preference for branched DNA species, such as Y-form DNA and Holliday junction DNA. The chain is Protein SPT2 homolog (spty2d1) from Xenopus laevis (African clawed frog).